An 89-amino-acid chain; its full sequence is MGDVAAKLKIMPESVDTDLVGLKENLKNVIPAGAQLHGDIVEEPIAFGLKALIVTLIVNDEEGGTEPAEEAFAKVSGVENVQVLEAYRI.

The protein belongs to the EF-1-beta/EF-1-delta family.

In terms of biological role, promotes the exchange of GDP for GTP in EF-1-alpha/GDP, thus allowing the regeneration of EF-1-alpha/GTP that could then be used to form the ternary complex EF-1-alpha/GTP/AAtRNA. In Methanosarcina mazei (strain ATCC BAA-159 / DSM 3647 / Goe1 / Go1 / JCM 11833 / OCM 88) (Methanosarcina frisia), this protein is Elongation factor 1-beta.